A 1304-amino-acid chain; its full sequence is Histone-lysine N-methyltransferase met-2 (1304 aa).

The segment covering 1–16 (MDQQEPSNNVDTSSIL) has biased composition (polar residues). The tract at residues 1–31 (MDQQEPSNNVDTSSILSDDGMETQEQSSFVT) is disordered. The stretch at 97 to 129 (NESEQEAVAAQRRVDAEKTAKDEAELKQQEEAE) forms a coiled coil. One can recognise an MBD domain in the interval 834–909 (FHRNSPIHTP…FSFDARIDTA (76 aa)). Residues 971–1049 (SGCSCDGDCS…SCYNRVVQNN (79 aa)) form the Pre-SET domain. Residues cysteine 973, cysteine 975, cysteine 979, cysteine 985, cysteine 987, cysteine 1030, cysteine 1034, cysteine 1036, and cysteine 1041 each contribute to the Zn(2+) site. The 226-residue stretch at 1052–1277 (YPMHIFKTAQ…AGDELTWDYQ (226 aa)) folds into the SET domain. S-adenosyl-L-methionine-binding positions include 1062–1064 (SGW), aspartate 1098, and tyrosine 1100. A compositionally biased stretch (basic and acidic residues) spans 1113–1122 (EKGREDHETD). Positions 1113–1201 (EKGREDHETD…DSMEKDNIES (89 aa)) are disordered. The segment covering 1128–1144 (DESDYDDEEGSDGDSGD) has biased composition (acidic residues). The segment covering 1152 to 1165 (KRQDSSESGEETKR) has biased composition (basic and acidic residues). A compositionally biased stretch (basic residues) spans 1166–1178 (LTRQKRKQSKKSG). Basic and acidic residues predominate over residues 1182-1201 (SVEKDDTTPRDSMEKDNIES). S-adenosyl-L-methionine-binding positions include arginine 1231 and 1234–1235 (NH). Zn(2+) is bound by residues cysteine 1237, cysteine 1290, cysteine 1292, and cysteine 1297. Residues 1286 to 1302 (TQLTCHCGAENCTGRLL) form the Post-SET domain.

It belongs to the class V-like SAM-binding methyltransferase superfamily.

Its subcellular location is the nucleus. It localises to the chromosome. The protein localises to the cytoplasm. It catalyses the reaction N(6)-methyl-L-lysyl(9)-[histone H3] + S-adenosyl-L-methionine = N(6),N(6)-dimethyl-L-lysyl(9)-[histone H3] + S-adenosyl-L-homocysteine + H(+). The enzyme catalyses L-lysyl(9)-[histone H3] + S-adenosyl-L-methionine = N(6)-methyl-L-lysyl(9)-[histone H3] + S-adenosyl-L-homocysteine + H(+). Its function is as follows. Histone methyltransferase which is required for the mono- and dimethylation of 'Lys-9' of histone H3. This increases the efficiency of set-25-mediated trimethylation of histone H3 'Lys-9'. Involved in the transcriptional repression of lin-3 which is required for the negative regulation of vulval cell fate specification during postembryonic development. Has a role in blocking checkpoint signaling and mediating the transcriptional silencing of meiotic sex chromosome inactivation; a mechanism which enables checkpoint proteins to distinguish between the partnerless male X chromosome and asynapsed chromosomes thereby shielding the lone X from inappropriate activation of an apoptotic program. Operates redundantly with set-25 to position chromatin at the nuclear periphery. Required for small-RNA-induced H3K9 methylation. Together with set-25, protects and stabilizes repeat-rich genomic regions by suppressing transcription-induced replication stress through methylation of H3K9. Together with spr-5, required for transgenerational fertility. This chain is Histone-lysine N-methyltransferase met-2 (met-2), found in Caenorhabditis elegans.